A 652-amino-acid polypeptide reads, in one-letter code: Acetyl-coenzyme A synthetase (652 aa).

CoA is bound by residues 191–194 (RAGN) and threonine 311. Residues 387–389 (GEP), 411–416 (DTWWQT), aspartate 503, and arginine 518 each bind ATP. Serine 526 provides a ligand contact to CoA. Arginine 529 serves as a coordination point for ATP. Positions 540, 542, and 545 each coordinate Mg(2+). Residue arginine 587 participates in CoA binding. Lysine 613 carries the post-translational modification N6-acetyllysine.

Belongs to the ATP-dependent AMP-binding enzyme family. The cofactor is Mg(2+). In terms of processing, acetylated. Deacetylation by the SIR2-homolog deacetylase activates the enzyme.

It carries out the reaction acetate + ATP + CoA = acetyl-CoA + AMP + diphosphate. Its function is as follows. Catalyzes the conversion of acetate into acetyl-CoA (AcCoA), an essential intermediate at the junction of anabolic and catabolic pathways. AcsA undergoes a two-step reaction. In the first half reaction, AcsA combines acetate with ATP to form acetyl-adenylate (AcAMP) intermediate. In the second half reaction, it can then transfer the acetyl group from AcAMP to the sulfhydryl group of CoA, forming the product AcCoA. The chain is Acetyl-coenzyme A synthetase from Marinomonas sp. (strain MWYL1).